Consider the following 388-residue polypeptide: Succinate--CoA ligase [ADP-forming] subunit beta (388 aa).

Residues 9–244 (KEIFRSMGVA…LEEEDPKEIE (236 aa)) enclose the ATP-grasp domain. Residues lysine 46, 53-55 (GRG), glutamate 99, cysteine 102, and glutamate 107 each bind ATP. 2 residues coordinate Mg(2+): asparagine 199 and aspartate 213. Substrate-binding positions include asparagine 264 and 321–323 (GIM).

Belongs to the succinate/malate CoA ligase beta subunit family. Heterotetramer of two alpha and two beta subunits. It depends on Mg(2+) as a cofactor.

The enzyme catalyses succinate + ATP + CoA = succinyl-CoA + ADP + phosphate. It catalyses the reaction GTP + succinate + CoA = succinyl-CoA + GDP + phosphate. It functions in the pathway carbohydrate metabolism; tricarboxylic acid cycle; succinate from succinyl-CoA (ligase route): step 1/1. In terms of biological role, succinyl-CoA synthetase functions in the citric acid cycle (TCA), coupling the hydrolysis of succinyl-CoA to the synthesis of either ATP or GTP and thus represents the only step of substrate-level phosphorylation in the TCA. The beta subunit provides nucleotide specificity of the enzyme and binds the substrate succinate, while the binding sites for coenzyme A and phosphate are found in the alpha subunit. This Staphylococcus aureus (strain Mu3 / ATCC 700698) protein is Succinate--CoA ligase [ADP-forming] subunit beta.